We begin with the raw amino-acid sequence, 263 residues long: 3-deoxy-manno-octulosonate cytidylyltransferase (263 aa).

Belongs to the KdsB family.

It is found in the cytoplasm. The enzyme catalyses 3-deoxy-alpha-D-manno-oct-2-ulosonate + CTP = CMP-3-deoxy-beta-D-manno-octulosonate + diphosphate. It participates in nucleotide-sugar biosynthesis; CMP-3-deoxy-D-manno-octulosonate biosynthesis; CMP-3-deoxy-D-manno-octulosonate from 3-deoxy-D-manno-octulosonate and CTP: step 1/1. The protein operates within bacterial outer membrane biogenesis; lipopolysaccharide biosynthesis. In terms of biological role, activates KDO (a required 8-carbon sugar) for incorporation into bacterial lipopolysaccharide in Gram-negative bacteria. The sequence is that of 3-deoxy-manno-octulosonate cytidylyltransferase from Burkholderia vietnamiensis (strain G4 / LMG 22486) (Burkholderia cepacia (strain R1808)).